The primary structure comprises 542 residues: Chaperonin GroEL 5 (542 aa).

Residues 30–33 (TLGP), Lys51, 87–91 (DGTTT), Gly415, and Asp496 contribute to the ATP site.

It belongs to the chaperonin (HSP60) family. In terms of assembly, forms a cylinder of 14 subunits composed of two heptameric rings stacked back-to-back. Interacts with the co-chaperonin GroES.

It is found in the cytoplasm. The enzyme catalyses ATP + H2O + a folded polypeptide = ADP + phosphate + an unfolded polypeptide.. Its function is as follows. Together with its co-chaperonin GroES, plays an essential role in assisting protein folding. The GroEL-GroES system forms a nano-cage that allows encapsulation of the non-native substrate proteins and provides a physical environment optimized to promote and accelerate protein folding. The sequence is that of Chaperonin GroEL 5 from Rhizobium meliloti (strain 1021) (Ensifer meliloti).